The primary structure comprises 120 residues: MSRLTLPKNARLLKRKQFVYVQRNGRCCRADQVTLRVVPSRHSNTSKVGITVSKKFGKAHQRNRFKRIVREAFRHVRPNLPGCQVVISPRGNSQPDFLKLSEELLQRIPEALPLASSSRC.

Belongs to the RnpA family. As to quaternary structure, consists of a catalytic RNA component (M1 or rnpB) and a protein subunit.

It carries out the reaction Endonucleolytic cleavage of RNA, removing 5'-extranucleotides from tRNA precursor.. RNaseP catalyzes the removal of the 5'-leader sequence from pre-tRNA to produce the mature 5'-terminus. It can also cleave other RNA substrates such as 4.5S RNA. The protein component plays an auxiliary but essential role in vivo by binding to the 5'-leader sequence and broadening the substrate specificity of the ribozyme. The protein is Ribonuclease P protein component of Chlamydia trachomatis serovar L2 (strain ATCC VR-902B / DSM 19102 / 434/Bu).